We begin with the raw amino-acid sequence, 155 residues long: Small ribosomal subunit protein uS7cz/uS7cy (155 aa).

Belongs to the universal ribosomal protein uS7 family. As to quaternary structure, part of the 30S ribosomal subunit.

It is found in the plastid. Its subcellular location is the chloroplast. Functionally, one of the primary rRNA binding proteins, it binds directly to 16S rRNA where it nucleates assembly of the head domain of the 30S subunit. This is Small ribosomal subunit protein uS7cz/uS7cy (rps7-A) from Nandina domestica (Heavenly bamboo).